Reading from the N-terminus, the 201-residue chain is Methylated-DNA--protein-cysteine methyltransferase (201 aa).

Tyr131, Gly132, and Arg146 together coordinate DNA. Cys163 serves as the catalytic Nucleophile; methyl group acceptor.

The protein belongs to the MGMT family.

Its subcellular location is the nucleus. The catalysed reaction is a 6-O-methyl-2'-deoxyguanosine in DNA + L-cysteinyl-[protein] = S-methyl-L-cysteinyl-[protein] + a 2'-deoxyguanosine in DNA. It catalyses the reaction a 4-O-methyl-thymidine in DNA + L-cysteinyl-[protein] = a thymidine in DNA + S-methyl-L-cysteinyl-[protein]. Its function is as follows. Involved in the cellular defense against the biological effects of O6-methylguanine (O6-MeG) and O4-methylthymine (O4-MeT) in DNA. Repairs the methylated nucleobase in DNA by stoichiometrically transferring the methyl group to a cysteine residue in the enzyme. This is a suicide reaction: the enzyme is irreversibly inactivated. In Lodderomyces elongisporus (strain ATCC 11503 / CBS 2605 / JCM 1781 / NBRC 1676 / NRRL YB-4239) (Yeast), this protein is Methylated-DNA--protein-cysteine methyltransferase (MGT1).